The primary structure comprises 397 residues: Cathepsin E-B (397 aa).

The first 16 residues, 1–16 (MRQILVLLLFVTLVYG), serve as a signal peptide directing secretion. The propeptide at 17–49 (LIRVPLKRQKSIRKTPKEKGKLSHVWTQQGIDM) is activation peptide. The region spanning 74–385 (YFGEISIGTP…DRGNNRVGLA (312 aa)) is the Peptidase A1 domain. An N-linked (GlcNAc...) asparagine glycan is attached at Asn86. The active site involves Asp92. Residues Cys105 and Cys110 are joined by a disulfide bond. The N-linked (GlcNAc...) asparagine glycan is linked to Asn130. Cys268 and Cys272 are disulfide-bonded. Asp277 is a catalytic residue. A disulfide bond links Cys310 and Cys344.

Belongs to the peptidase A1 family. Homodimer; disulfide-linked. Glycosylated. Contains high mannose-type oligosaccharide. In terms of tissue distribution, expressed predominantly in the anterior and posterior adult stomach and at much lower levels in the larval foregut.

The protein resides in the endosome. The catalysed reaction is Similar to cathepsin D, but slightly broader specificity.. In terms of biological role, may have a role in immune function. Probably involved in the processing of antigenic peptides during MHC class II-mediated antigen presentation. This Xenopus laevis (African clawed frog) protein is Cathepsin E-B (ctse-b).